We begin with the raw amino-acid sequence, 208 residues long: FMN-dependent NADH:quinone oxidoreductase 1 (208 aa).

Ser17–Ser19 is a binding site for FMN.

The protein belongs to the azoreductase type 1 family. As to quaternary structure, homodimer. It depends on FMN as a cofactor.

It carries out the reaction 2 a quinone + NADH + H(+) = 2 a 1,4-benzosemiquinone + NAD(+). The catalysed reaction is N,N-dimethyl-1,4-phenylenediamine + anthranilate + 2 NAD(+) = 2-(4-dimethylaminophenyl)diazenylbenzoate + 2 NADH + 2 H(+). Its function is as follows. Quinone reductase that provides resistance to thiol-specific stress caused by electrophilic quinones. Also exhibits azoreductase activity. Catalyzes the reductive cleavage of the azo bond in aromatic azo compounds to the corresponding amines. The chain is FMN-dependent NADH:quinone oxidoreductase 1 from Listeria innocua serovar 6a (strain ATCC BAA-680 / CLIP 11262).